The sequence spans 151 residues: UPF0208 membrane protein YPDSF_1972 (151 aa).

2 helical membrane passes run 46–66 (FGIR…IALG) and 69–89 (LGPA…GLWW).

This sequence belongs to the UPF0208 family.

It localises to the cell inner membrane. The sequence is that of UPF0208 membrane protein YPDSF_1972 from Yersinia pestis (strain Pestoides F).